Here is a 444-residue protein sequence, read N- to C-terminus: Argininosuccinate synthase (444 aa).

ATP contacts are provided by residues 18 to 26 (AFSGGLDTS) and Ala44. Tyr100 is a binding site for L-citrulline. The ATP site is built by Gly130 and Thr132. The L-aspartate site is built by Thr132, Asn136, and Asp137. Asn136 is a binding site for L-citrulline. An ATP-binding site is contributed by Asp137. The L-citrulline site is built by Arg140 and Ser193. An ATP-binding site is contributed by Asp195. L-citrulline contacts are provided by Thr202, Glu204, and Glu281.

Belongs to the argininosuccinate synthase family. Type 2 subfamily. Homotetramer.

Its subcellular location is the cytoplasm. The catalysed reaction is L-citrulline + L-aspartate + ATP = 2-(N(omega)-L-arginino)succinate + AMP + diphosphate + H(+). It participates in amino-acid biosynthesis; L-arginine biosynthesis; L-arginine from L-ornithine and carbamoyl phosphate: step 2/3. The polypeptide is Argininosuccinate synthase (Histophilus somni (strain 2336) (Haemophilus somnus)).